We begin with the raw amino-acid sequence, 183 residues long: Capsid protein (183 aa).

The interval 143–183 (LPETAVVRRRGRSPRRRTPSPRRRRSQSPRRRRSQSPASQC) is disordered. The segment covering 149-176 (VRRRGRSPRRRTPSPRRRRSQSPRRRRS) has biased composition (basic residues). A phosphoserine; by host mark is found at serine 155, serine 162, and serine 170. One copy of the 1; half-length repeat lies at 155–161 (SPRRRTP). Positions 155–177 (SPRRRTPSPRRRRSQSPRRRRSQ) are 3 X 8 AA repeats of S-P-R-R-R-[PR]-S-Q. Residues 158 to 175 (RRTPSPRRRRSQSPRRRR) carry the Bipartite nuclear localization signal motif. 2 repeat units span residues 162–169 (SPRRRRSQ) and 170–177 (SPRRRRSQ). An RNA binding region spans residues 177 to 183 (QSPASQC).

This sequence belongs to the orthohepadnavirus core antigen family. As to quaternary structure, homodimerizes, then multimerizes. Interacts with cytosol exposed regions of viral L glycoprotein present in the reticulum-to-Golgi compartment. Interacts with human FLNB. Phosphorylated form interacts with host importin alpha; this interaction depends on the exposure of the NLS, which itself depends upon genome maturation and/or phosphorylation of the capsid protein. Interacts with host NUP153. Post-translationally, phosphorylated by host SRPK1, SRPK2, and maybe protein kinase C or GAPDH. Phosphorylation is critical for pregenomic RNA packaging. Protein kinase C phosphorylation is stimulated by HBx protein and may play a role in transport of the viral genome to the nucleus at the late step during the viral replication cycle.

Its subcellular location is the virion. It localises to the host cytoplasm. Self assembles to form an icosahedral capsid. Most capsids appear to be large particles with an icosahedral symmetry of T=4 and consist of 240 copies of capsid protein, though a fraction forms smaller T=3 particles consisting of 180 capsid proteins. Entering capsids are transported along microtubules to the nucleus. Phosphorylation of the capsid is thought to induce exposure of nuclear localization signal in the C-terminal portion of the capsid protein that allows binding to the nuclear pore complex via the importin (karyopherin-) alpha and beta. Capsids are imported in intact form through the nuclear pore into the nuclear basket, where it probably binds NUP153. Only capsids that contain the mature viral genome can release the viral DNA and capsid protein into the nucleoplasm. Immature capsids get stuck in the basket. Capsids encapsulate the pre-genomic RNA and the P protein. Pre-genomic RNA is reverse-transcribed into DNA while the capsid is still in the cytoplasm. The capsid can then either be directed to the nucleus, providing more genomes for transcription, or bud through the endoplasmic reticulum to provide new virions. This is Capsid protein from Gorilla gorilla (western gorilla).